We begin with the raw amino-acid sequence, 147 residues long: Helix-loop-helix protein 13 (147 aa).

The bHLH domain occupies 41–93 (EERQTASIRERKRMCSINVAFIELRNYIPTFPYEKRLSKIDTLNLAIAYINML).

Expressed in hermaphrodite dopaminergic neurons (ADE, CEP, and PDE).

Its subcellular location is the nucleus. The protein resides in the cytoplasm. Its function is as follows. Transcriptional activator. Shown to have a role in the negative regulation of exit from L1 arrest and dauer diapause dependent on IIS signaling (insulin and insulin-like growth factor (IGF) signaling). Hypodermal expression is regulated by IIS/daf-16 while neuronal expression is not under the control of IIS/daf-16. This Caenorhabditis elegans protein is Helix-loop-helix protein 13.